Reading from the N-terminus, the 181-residue chain is uncharacterized protein (181 aa).

Positions 162 to 181 (QARGPAGTRTPQRRCSSHEA) are disordered.

This is an uncharacterized protein from Homo sapiens (Human).